The sequence spans 462 residues: Cysteine--tRNA ligase (462 aa).

Position 24 (cysteine 24) interacts with Zn(2+). A 'HIGH' region motif is present at residues 26-36; the sequence is PTVYDDAHLGH. Zn(2+) is bound by residues cysteine 199, histidine 224, and glutamate 228. Positions 256–260 match the 'KMSKS' region motif; that stretch reads KMSKS. Position 259 (lysine 259) interacts with ATP.

It belongs to the class-I aminoacyl-tRNA synthetase family. As to quaternary structure, monomer. Zn(2+) serves as cofactor.

Its subcellular location is the cytoplasm. It carries out the reaction tRNA(Cys) + L-cysteine + ATP = L-cysteinyl-tRNA(Cys) + AMP + diphosphate. This is Cysteine--tRNA ligase from Campylobacter jejuni subsp. jejuni serotype O:6 (strain 81116 / NCTC 11828).